A 133-amino-acid chain; its full sequence is Small ribosomal subunit protein uS9 (133 aa).

Residues 114-133 are disordered; the sequence is VERKKYGKKKARRSPQFSKR. Basic residues predominate over residues 118–133; the sequence is KYGKKKARRSPQFSKR.

This sequence belongs to the universal ribosomal protein uS9 family.

This Fusobacterium nucleatum subsp. nucleatum (strain ATCC 25586 / DSM 15643 / BCRC 10681 / CIP 101130 / JCM 8532 / KCTC 2640 / LMG 13131 / VPI 4355) protein is Small ribosomal subunit protein uS9.